Here is a 154-residue protein sequence, read N- to C-terminus: Protein X (154 aa).

The mitochondrial targeting sequence stretch occupies residues 68-117; that stretch reads PCALRFTSARRMETTVNAHQILPKVLHKRTLGLSAMSTTDLEAYFKDCLF.

It belongs to the orthohepadnavirus protein X family. As to quaternary structure, may form homodimer. May interact with host CEBPA, CFLAR, CREB1, DDB1, E4F1, HBXIP, HSPD1/HSP60, NFKBIA, POLR2E and SMAD4. Interacts with host SMC5-SMC6 complex and induces its degradation. Interacts with host TRPC4AP; leading to prevent ubiquitination of TRPC4AP. Interacts with host PLSCR1; this interaction promotes ubiquitination and degradation of HBx and impairs HBx-mediated cell proliferation. A fraction may be phosphorylated in insect cells and HepG2 cells, a human hepatoblastoma cell line. Phosphorylated in vitro by host protein kinase C or mitogen-activated protein kinase. N-acetylated in insect cells.

It is found in the host cytoplasm. The protein resides in the host nucleus. The protein localises to the host mitochondrion. Functionally, multifunctional protein that plays a role in silencing host antiviral defenses and promoting viral transcription. Does not seem to be essential for HBV infection. May be directly involved in development of cirrhosis and liver cancer (hepatocellular carcinoma). Most of cytosolic activities involve modulation of cytosolic calcium. The effect on apoptosis is controversial depending on the cell types in which the studies have been conducted. May induce apoptosis by localizing in mitochondria and causing loss of mitochondrial membrane potential. May also modulate apoptosis by binding host CFLAR, a key regulator of the death-inducing signaling complex (DISC). Promotes viral transcription by using the host E3 ubiquitin ligase DDB1 to target the SMC5-SMC6 complex to proteasomal degradation. This host complex would otherwise bind to viral episomal DNA, and prevents its transcription. Moderately stimulates transcription of many different viral and cellular transcription elements. Promoters and enhancers stimulated by HBx contain DNA binding sites for NF-kappa-B, AP-1, AP-2, c-EBP, ATF/CREB, or the calcium-activated factor NF-AT. This is Protein X from Hepatitis B virus genotype D subtype ayw (isolate France/Tiollais/1979) (HBV-D).